Consider the following 382-residue polypeptide: Protein delta homolog 2 (382 aa).

The N-terminal stretch at 1–26 is a signal peptide; the sequence is MPSGCRCLNLVCLLCILGATSQPARA. EGF-like domains follow at residues 27-58, 62-89, 91-129, and 131-172; these read DDCS…LHCE, RMPG…KFCD, DEHI…RGCE, and KAGP…AHCE. Over 27-305 the chain is Extracellular; that stretch reads DDCSSHCDLA…RQESGLGESS (279 aa). 17 disulfides stabilise this stretch: C29/C40, C33/C46, C48/C57, C66/C71, C79/C88, C95/C107, C101/C117, C119/C128, C135/C148, C142/C160, C162/C171, C178/C189, C183/C198, C200/C209, C216/C227, C221/C236, and C238/C247. The N-linked (GlcNAc...) asparagine glycan is linked to N157. The 37-residue stretch at 174-210 folds into the EGF-like 5; calcium-binding domain; it reads NVDDCLMRPCANGATCIDGINRFSCLCPEGFAGRFCT. The 37-residue stretch at 212-248 folds into the EGF-like 6; calcium-binding domain; the sequence is NLDDCASRPCQRGARCRDRVHDFDCLCPSGYGGKTCE. The helical transmembrane segment at 306 to 326 threads the bilayer; it reads LVALVVFGSLTAALVLATVLL. At 327–382 the chain is on the cytoplasmic side; sequence TLRAWRRGICPTGPCCYPAPHYAPARQDQECQVSMLPAGFPLSPDLPPEPGKTTAL.

In terms of tissue distribution, detected in a number of tissues including lung, brain, adrenal gland, testis, adult liver, placenta, ovary and thymus. Not detected in fetal liver or in adult spleen, muscle and heart.

The protein resides in the membrane. Functionally, regulates adipogenesis. The sequence is that of Protein delta homolog 2 (Dlk2) from Mus musculus (Mouse).